The chain runs to 358 residues: tRNA-specific 2-thiouridylase MnmA (358 aa).

Residues 6 to 13 (AMSGGVDS) and L32 contribute to the ATP site. C101 serves as the catalytic Nucleophile. The cysteines at positions 101 and 193 are disulfide-linked. G125 is an ATP binding site. The interval 143–145 (KDQ) is interaction with tRNA. Catalysis depends on C193, which acts as the Cysteine persulfide intermediate.

This sequence belongs to the MnmA/TRMU family.

It is found in the cytoplasm. The enzyme catalyses S-sulfanyl-L-cysteinyl-[protein] + uridine(34) in tRNA + AH2 + ATP = 2-thiouridine(34) in tRNA + L-cysteinyl-[protein] + A + AMP + diphosphate + H(+). Its function is as follows. Catalyzes the 2-thiolation of uridine at the wobble position (U34) of tRNA, leading to the formation of s(2)U34. This Mycolicibacterium paratuberculosis (strain ATCC BAA-968 / K-10) (Mycobacterium paratuberculosis) protein is tRNA-specific 2-thiouridylase MnmA.